Reading from the N-terminus, the 113-residue chain is Putative pterin-4-alpha-carbinolamine dehydratase (113 aa).

It belongs to the pterin-4-alpha-carbinolamine dehydratase family.

The catalysed reaction is (4aS,6R)-4a-hydroxy-L-erythro-5,6,7,8-tetrahydrobiopterin = (6R)-L-erythro-6,7-dihydrobiopterin + H2O. The chain is Putative pterin-4-alpha-carbinolamine dehydratase from Pelodictyon phaeoclathratiforme (strain DSM 5477 / BU-1).